A 760-amino-acid chain; its full sequence is Pentatricopeptide repeat-containing protein At1g20230 (760 aa).

15 PPR repeats span residues 49–79, 80–114, 115–149, 150–180, 181–215, 216–250, 251–285, 286–316, 317–351, 352–386, 387–421, 422–452, 453–487, 488–523, and 524–554; these read DGYI…IPDP, TIYS…GLIP, DSHV…GLDM, DAFV…MSDK, DVVT…GIEA, NIVS…GFCP, DQVT…GLLK, DKCV…FEMM, EAGV…TMEL, NVVS…GVKP, NHVT…HLLD, NVHV…MPTK, NLVC…RLKP, DFIS…GIKP, and RLEH…MPFE. The segment at 559–634 is type E motif; that stretch reads VWGALLNSCR…NPGCSWIQVK (76 aa). The tract at residues 635-665 is type E(+) motif; it reads NRVYTLLAGDKSHPQIDQITEKMDEISKEMR. Residues 666 to 760 form a type DYW motif region; that stretch reads KSGHRPNLDF…DGICSCGDFW (95 aa).

This sequence belongs to the PPR family. PCMP-H subfamily.

The protein is Pentatricopeptide repeat-containing protein At1g20230 (PCMP-H21) of Arabidopsis thaliana (Mouse-ear cress).